A 222-amino-acid polypeptide reads, in one-letter code: Embryonic stem cell-related gene protein (222 aa).

As to expression, expressed only in fetal ovary and in undifferentiated ES cells.

It localises to the nucleus. This is Embryonic stem cell-related gene protein (ESRG) from Homo sapiens (Human).